A 620-amino-acid polypeptide reads, in one-letter code: Chaperone protein HscA homolog (620 aa).

It belongs to the heat shock protein 70 family.

Chaperone involved in the maturation of iron-sulfur cluster-containing proteins. Has a low intrinsic ATPase activity which is markedly stimulated by HscB. In Janthinobacterium sp. (strain Marseille) (Minibacterium massiliensis), this protein is Chaperone protein HscA homolog.